The sequence spans 117 residues: Large ribosomal subunit protein bL20 (117 aa).

The protein belongs to the bacterial ribosomal protein bL20 family.

Its function is as follows. Binds directly to 23S ribosomal RNA and is necessary for the in vitro assembly process of the 50S ribosomal subunit. It is not involved in the protein synthesizing functions of that subunit. This Limosilactobacillus reuteri (strain DSM 20016) (Lactobacillus reuteri) protein is Large ribosomal subunit protein bL20.